A 910-amino-acid chain; its full sequence is Importin subunit beta-2 (910 aa).

HEAT repeat units follow at residues 12-39, 44-82, 93-126, 132-169, 177-207, 220-247, 259-286, 302-406, 414-442, 454-481, 499-532, 540-573, 581-619, 627-677, 690-721, 729-764, 772-807, 815-848, and 857-888; these read VLVE…NLLE, IPDL…VSSL, YTKS…RWGI, VLPQ…LDRD, DFMI…QFVL, FLET…VYLL, GSIV…FWLA, DKIV…LSSF, IILP…GAIA, PELY…TLGR, FVPL…EEQA, LEPI…ADYV, RYIE…VALR, AETY…ALGS, LGQI…MYCF, DALL…LQLG, KPLL…VYNP, ELFY…LACN, and PMFV…VELF. The Importin N-terminal domain maps to 34-122; the sequence is ALNLLEKAKD…SGNVITTIIS (89 aa). The disordered stretch occupies residues 333 to 381; it reads DREEDIRPQHAKGKSRITLNTQGPITQQGSSNADADELEDEDEDDDEFD. Polar residues predominate over residues 349–364; that stretch reads ITLNTQGPITQQGSSN. Residues 366-381 are compositionally biased toward acidic residues; the sequence is DADELEDEDEDDDEFD.

It belongs to the importin beta family. Importin beta-2 subfamily. Interacts with Ran; interacts specifically with the GTP-bound form of Ran (GTP-Ran), protecting it from GTP hydrolysis and nucleotide exchange. Interacts with nucleoporins.

The protein resides in the cytoplasm. Its subcellular location is the nucleus envelope. Functionally, functions in nuclear protein import as nuclear transport receptor. Serves as receptor for arginine/glycine-rich nuclear localization signals (rg-NLS) and PY-NLS in cargo substrates. Its predominant cargo substrate seems to be mRNA-binding proteins. Mediates docking of the importin/substrate complex to the nuclear pore complex (NPC) through binding to repeat-containing nucleoporins. The complex is subsequently translocated through the pore by an energy requiring, Ran-dependent mechanism. At the nucleoplasmic side of the NPC, GTP-Ran binding leads to release of the cargo. The importin is re-exported from the nucleus to the cytoplasm where GTP hydrolysis releases Ran from importin. The directionality of nuclear import is thought to be conferred by an asymmetric distribution of the GTP- and GDP-bound forms of Ran between the cytoplasm and nucleus. The chain is Importin subunit beta-2 from Schizosaccharomyces pombe (strain 972 / ATCC 24843) (Fission yeast).